Reading from the N-terminus, the 175-residue chain is VQ motif-containing protein 25 (175 aa).

Positions 50-59 (FRELVQSLTG) match the VQ motif.

The protein resides in the nucleus. Functionally, may function as negative regulator of plant defense. This Arabidopsis thaliana (Mouse-ear cress) protein is VQ motif-containing protein 25.